The chain runs to 427 residues: Trigger factor (427 aa).

The PPIase FKBP-type domain occupies 163–248 (GDTVVIDFEG…VHEVKAKELP (86 aa)).

This sequence belongs to the FKBP-type PPIase family. Tig subfamily.

The protein resides in the cytoplasm. It catalyses the reaction [protein]-peptidylproline (omega=180) = [protein]-peptidylproline (omega=0). Functionally, involved in protein export. Acts as a chaperone by maintaining the newly synthesized protein in an open conformation. Functions as a peptidyl-prolyl cis-trans isomerase. The sequence is that of Trigger factor from Enterococcus faecalis (strain ATCC 700802 / V583).